We begin with the raw amino-acid sequence, 115 residues long: Ribonuclease P protein component (115 aa).

Belongs to the RnpA family. In terms of assembly, consists of a catalytic RNA component (M1 or rnpB) and a protein subunit.

It catalyses the reaction Endonucleolytic cleavage of RNA, removing 5'-extranucleotides from tRNA precursor.. Functionally, RNaseP catalyzes the removal of the 5'-leader sequence from pre-tRNA to produce the mature 5'-terminus. It can also cleave other RNA substrates such as 4.5S RNA. The protein component plays an auxiliary but essential role in vivo by binding to the 5'-leader sequence and broadening the substrate specificity of the ribozyme. This Symbiobacterium thermophilum (strain DSM 24528 / JCM 14929 / IAM 14863 / T) protein is Ribonuclease P protein component.